We begin with the raw amino-acid sequence, 109 residues long: Mitochondrial pyruvate carrier 1 (109 aa).

Residue A2 is modified to N-acetylalanine. The Mitochondrial matrix portion of the chain corresponds to 2-20; it reads AGALVRKAADYVRSKDFRD. The helical transmembrane segment at 21–41 threads the bilayer; it reads YLMSTHFWGPVANWGLPIAAI. Topologically, residues 42 to 52 are mitochondrial intermembrane; the sequence is NDMKKSPEIIS. Residues 53-71 form a helical membrane-spanning segment; the sequence is GRMTFALCCYSLTFMRFAY. At K72 the chain carries N6-acetyllysine. At 72-109 the chain is on the mitochondrial matrix side; the sequence is KVQPRNWLLFACHATNEVAQLIQGGRLIKHEMTKTASA.

This sequence belongs to the mitochondrial pyruvate carrier (MPC) (TC 2.A.105) family. Homodimer. Forms heterodimer with MPC2. The heterodimer is the more stable and dominant form.

The protein localises to the mitochondrion inner membrane. The catalysed reaction is pyruvate(out) + H(+)(out) = pyruvate(in) + H(+)(in). Its function is as follows. Mediates the uptake of pyruvate into mitochondria. The polypeptide is Mitochondrial pyruvate carrier 1 (MPC1) (Homo sapiens (Human)).